Reading from the N-terminus, the 451-residue chain is AAA-ATPase At3g28570, mitochondrial (451 aa).

The N-terminal 48 residues, 1-48, are a transit peptide targeting the mitochondrion; it reads MFAENLTRIGSNVAGLFFVWSTLKRYFPRQIQQLLFNAIQRIPIFKRL. ATP is bound at residue 243–250; it reads GPPGTGKS.

The protein belongs to the AAA ATPase family. BCS1 subfamily. The cofactor is Mg(2+).

The protein resides in the mitochondrion. The catalysed reaction is ATP + H2O = ADP + phosphate + H(+). This chain is AAA-ATPase At3g28570, mitochondrial, found in Arabidopsis thaliana (Mouse-ear cress).